Reading from the N-terminus, the 620-residue chain is Glutathione-regulated potassium-efflux system protein KefC (620 aa).

A run of 12 helical transmembrane segments spans residues 4–24, 26–46, 54–74, 90–110, 114–134, 149–169, 178–198, 218–238, 270–290, 294–314, 327–347, and 359–379; these read HTLI…PIAV, LGLG…PWGL, SILH…GLEL, GALQ…LLGL, VAEL…MQAM, FAVL…IPLL, MGAF…VVLL, VFSA…EEVG, GLLL…GTLL, LRIV…LWLI, WFAV…GAAQ, and SLTL…VILN. The RCK N-terminal domain maps to 399–518; it reads QPRVIIAGFG…AGVEKPERET (120 aa). A disordered region spans residues 597–620; that stretch reads GWQGTEEGKHTGNMADEPETKPSS.

The protein belongs to the monovalent cation:proton antiporter 2 (CPA2) transporter (TC 2.A.37) family. KefC subfamily. As to quaternary structure, homodimer. Interacts with the regulatory subunit KefF.

The protein resides in the cell inner membrane. Pore-forming subunit of a potassium efflux system that confers protection against electrophiles. Catalyzes K(+)/H(+) antiport. The polypeptide is Glutathione-regulated potassium-efflux system protein KefC (Escherichia coli O127:H6 (strain E2348/69 / EPEC)).